Here is a 209-residue protein sequence, read N- to C-terminus: Probable glutathione peroxidase 8 (209 aa).

Methionine 1 is subject to N-acetylmethionine. The chain crosses the membrane as a helical span at residues 18-40; it reads IFAVLLSMVLCTVMLFLLQLKFL. The active site involves cysteine 79.

This sequence belongs to the glutathione peroxidase family.

It is found in the membrane. It carries out the reaction 2 glutathione + H2O2 = glutathione disulfide + 2 H2O. The protein is Probable glutathione peroxidase 8 (Gpx8) of Mus musculus (Mouse).